A 485-amino-acid polypeptide reads, in one-letter code: T-complex protein 1 subunit theta (485 aa).

The protein belongs to the TCP-1 chaperonin family. As to quaternary structure, component of the T-complex protein 1 (TCP1) complex.

The protein localises to the cytoplasm. In terms of biological role, molecular chaperone; assists the folding of proteins upon ATP hydrolysis. The chain is T-complex protein 1 subunit theta (CCT8) from Encephalitozoon cuniculi (strain GB-M1) (Microsporidian parasite).